Consider the following 360-residue polypeptide: Mitogen-activated protein kinase 1 (360 aa).

Ala2 bears the N-acetylalanine mark. The Protein kinase domain maps to 25-313 (YTNLSYIGEG…VEQALAHPYL (289 aa)). Ser29 is modified (phosphoserine; by SGK1). Residues 31-39 (IGEGAYGMV) and Lys54 contribute to the ATP site. Asp149 functions as the Proton acceptor in the catalytic mechanism. The residue at position 185 (Thr185) is a Phosphothreonine; by MAP2K1 and MAP2K2. The TXY signature appears at 185–187 (TEY). Tyr187 bears the Phosphotyrosine; by MAP2K1 and MAP2K2 mark. Thr190 carries the phosphothreonine; by autocatalysis modification. Phosphoserine occurs at positions 246, 248, and 284.

This sequence belongs to the protein kinase superfamily. CMGC Ser/Thr protein kinase family. MAP kinase subfamily. As to quaternary structure, binds both upstream activators and downstream substrates in multimolecular complexes. Interacts with ADAM15, ARHGEF2, ARRB2, DAPK1 (via death domain), HSF4, IER3, IPO7, MKNK2, MORG1, NISCH, PEA15, SGK1, and isoform 1 of NEK2. Interacts (via phosphorylated form) with TPR (via C-terminal region and phosphorylated form); the interaction requires dimerization of MAPK1/ERK2 and increases following EGF stimulation. Interacts with MAP2K1. Interacts with DUSP6. Interacts (phosphorylated form) with CAV2 ('Tyr-19'-phosphorylated form); the interaction, promoted by insulin, leads to nuclear location and MAPK1 activation. MKNK2 isoform 1 binding prevents from dephosphorylation and inactivation. Interacts with DCC. The phosphorylated form interacts with PML. Interacts with STYX. Interacts with CDK2AP2. Interacts with CAVIN4. Interacts with DUSP7; the interaction enhances DUSP7 phosphatase activity. Interacts with GIT1; this interaction is necessary for MAPK1 localization to focal adhesions. Interacts with ZNF263. Interacts with phosphoglycerate kinase PGK1; the interaction is direct, occurs under hypoxic conditions, and promotes interaction between PGK1 and PIN1. Requires Mg(2+) as cofactor. Post-translationally, dually phosphorylated on Thr-185 and Tyr-187, which activates the enzyme. Phosphorylated upon FLT3 and KIT signaling. Phosphorylation on Ser-29 by SGK1 results in its activation by enhancing its interaction with MAP2K1/MEK1 and MAP2K2/MEK2. Phosphorylation at Ser-246 and Ser-248 as well as autophosphorylation at Thr-190 promote nuclear localization. Ligand-activated ALK induces tyrosine phosphorylation. Dephosphorylated by PTPRJ at Tyr-187. Dephosphorylated by DUSP1 and DUSP2 at Thr-185 and Tyr-187. In terms of processing, ISGylated. Ubiquitinated by TRIM15 via 'Lys-63'-linked ubiquitination; leading to activation. Deubiquitinated by CYLD.

It is found in the nucleus. The protein localises to the cytoplasm. The protein resides in the cytoskeleton. It localises to the microtubule organizing center. Its subcellular location is the centrosome. It is found in the spindle. The protein localises to the membrane. The protein resides in the caveola. It localises to the cell junction. Its subcellular location is the focal adhesion. The catalysed reaction is L-seryl-[protein] + ATP = O-phospho-L-seryl-[protein] + ADP + H(+). It catalyses the reaction L-threonyl-[protein] + ATP = O-phospho-L-threonyl-[protein] + ADP + H(+). Its activity is regulated as follows. Phosphorylated by MAP2K1/MEK1 and MAP2K2/MEK2 on Thr-185 and Tyr-187 in response to external stimuli like insulin or NGF. Both phosphorylations are required for activity. This phosphorylation causes dramatic conformational changes, which enable full activation and interaction of MAPK1/ERK2 with its substrates. Phosphorylation on Ser-29 by SGK1 results in its activation by enhancing its interaction with MAP2K1/MEK1 and MAP2K2/MEK2. Dephosphorylated and inactivated by DUSP1, DUSP3, DUSP6 and DUSP9. Inactivated by pyrimidylpyrrole inhibitors. Its function is as follows. Serine/threonine kinase which acts as an essential component of the MAP kinase signal transduction pathway. MAPK1/ERK2 and MAPK3/ERK1 are the 2 MAPKs which play an important role in the MAPK/ERK cascade. They participate also in a signaling cascade initiated by activated KIT and KITLG/SCF. Depending on the cellular context, the MAPK/ERK cascade mediates diverse biological functions such as cell growth, adhesion, survival and differentiation through the regulation of transcription, translation, cytoskeletal rearrangements. The MAPK/ERK cascade also plays a role in initiation and regulation of meiosis, mitosis, and postmitotic functions in differentiated cells by phosphorylating a number of transcription factors. About 160 substrates have already been discovered for ERKs. Many of these substrates are localized in the nucleus, and seem to participate in the regulation of transcription upon stimulation. However, other substrates are found in the cytosol as well as in other cellular organelles, and those are responsible for processes such as translation, mitosis and apoptosis. Moreover, the MAPK/ERK cascade is also involved in the regulation of the endosomal dynamics, including lysosome processing and endosome cycling through the perinuclear recycling compartment (PNRC); as well as in the fragmentation of the Golgi apparatus during mitosis. The substrates include transcription factors (such as ATF2, BCL6, ELK1, ERF, FOS, HSF4 or SPZ1), cytoskeletal elements (such as CANX, CTTN, GJA1, MAP2, MAPT, PXN, SORBS3 or STMN1), regulators of apoptosis (such as BAD, BTG2, CASP9, DAPK1, IER3, MCL1 or PPARG), regulators of translation (such as EIF4EBP1 and FXR1) and a variety of other signaling-related molecules (like ARHGEF2, DCC, FRS2 or GRB10). Protein kinases (such as RAF1, RPS6KA1/RSK1, RPS6KA3/RSK2, RPS6KA2/RSK3, RPS6KA6/RSK4, SYK, MKNK1/MNK1, MKNK2/MNK2, RPS6KA5/MSK1, RPS6KA4/MSK2, MAPKAPK3 or MAPKAPK5) and phosphatases (such as DUSP1, DUSP4, DUSP6 or DUSP16) are other substrates which enable the propagation the MAPK/ERK signal to additional cytosolic and nuclear targets, thereby extending the specificity of the cascade. Mediates phosphorylation of TPR in response to EGF stimulation. May play a role in the spindle assembly checkpoint. Phosphorylates PML and promotes its interaction with PIN1, leading to PML degradation. Phosphorylates CDK2AP2. Phosphorylates phosphoglycerate kinase PGK1 under hypoxic conditions to promote its targeting to the mitochondrion and suppress the formation of acetyl-coenzyme A from pyruvate. Acts as a transcriptional repressor. Binds to a [GC]AAA[GC] consensus sequence. Repress the expression of interferon gamma-induced genes. Seems to bind to the promoter of CCL5, DMP1, IFIH1, IFITM1, IRF7, IRF9, LAMP3, OAS1, OAS2, OAS3 and STAT1. Transcriptional activity is independent of kinase activity. The polypeptide is Mitogen-activated protein kinase 1 (Bos taurus (Bovine)).